The following is a 297-amino-acid chain: uncharacterized protein (297 aa).

Residues 1 to 24 (MRAINKFLITVCIALLASVAVALG) form the signal peptide. Heme-binding residues include Cys-58, Cys-61, His-62, Cys-141, Cys-144, His-145, Cys-167, Cys-170, His-171, Cys-223, Cys-226, His-227, Cys-264, Cys-267, and His-268. Residues 277–297 (TNSVDTWSREGEGAEVQQLPH) are disordered.

In terms of processing, binds 5 heme groups per subunit.

This is an uncharacterized protein from Archaeoglobus fulgidus (strain ATCC 49558 / DSM 4304 / JCM 9628 / NBRC 100126 / VC-16).